Reading from the N-terminus, the 376-residue chain is Polycomb group protein FIE1 (376 aa).

WD repeat units follow at residues 85-127 (DKDE…LLKT), 130-170 (GHGD…CILI), 176-216 (GHRN…PYVE), 242-279 (VHSN…QSPG), 291-332 (VPEC…PVLT), and 339-376 (QCKS…HPKA).

This sequence belongs to the WD repeat ESC family. Interacts with EZ1. Component of the polycomb repressive complex 2 (PRC2), composed of the core PRC2 components EMF2B, EZ1 and CLF. PRC2 methylates 'Lys-27' residues of histone H3 (H3K27me3), leading to transcriptional repression of the affected target gene. In terms of tissue distribution, widely expressed.

Functionally, polycomb group (PcG) protein. PcG proteins act by forming multiprotein complexes, which are required to maintain the transcriptionally repressive state of homeotic genes throughout development. PcG proteins are not required to initiate repression, but to maintain it during later stages of development. They act via the methylation of histones, rendering chromatin heritably changed in its expressibility. Involved in the regulation of seed endosperm development, grain filling and seed dormancy. FIE2-containing PcG complex in seed endosperm regulates the expression of various transcription factors by trimethylation on histone H3 'Lys-27' (H3K27me3) of target genes. Involved in the overall expression regulation of a large number of nutrient metabolism genes. Involved in the regulation of seed endosperm development. Involved in the regulation of vegetative development, particularly in stem cell maintenance in the root system, where it maintains the suppression of key differentiation regulators. The sequence is that of Polycomb group protein FIE1 from Oryza sativa subsp. japonica (Rice).